Reading from the N-terminus, the 261-residue chain is MQKLALGIEYDGSWYCGWQRQRDAPSIQSYIENAIKKITSESVTVFCAGRTDSGVHALGQVVHFETYSRRSKSAWTLGMNRYLPSSICVRWARLVNKDFHARFSAISRRYCYIINNNCIRSALLFRKTWHYKKYLDINKMCDAAQYLLGENDFSSFRAAGCQSYSARRKLYHIRIIRKGQCIVIDIKANSFMYRMVRNIVGSLVKVGCGEQPEKWIAELLENCNRSLAGVTAPASGLYLVEVKYPSDFSIPSSFIEELWCA.

D52 functions as the Nucleophile in the catalytic mechanism. Y110 lines the substrate pocket.

The protein belongs to the tRNA pseudouridine synthase TruA family. As to quaternary structure, homodimer.

It carries out the reaction uridine(38/39/40) in tRNA = pseudouridine(38/39/40) in tRNA. Its function is as follows. Formation of pseudouridine at positions 38, 39 and 40 in the anticodon stem and loop of transfer RNAs. The polypeptide is tRNA pseudouridine synthase A (Blochmanniella pennsylvanica (strain BPEN)).